The primary structure comprises 590 residues: (+)-sabinene synthase, chloroplastic (590 aa).

Residues 1 to 51 constitute a chloroplast transit peptide; that stretch reads MSSISINIAMPLNSLHNFERKPSKAWSTSCTAPAARLRASSSLQQEKPHQI. Residues Asp343, Asp347, Asp487, Thr491, and Glu495 each coordinate Mg(2+). A DDXXD motif motif is present at residues 343–347; it reads DDVYD.

Belongs to the terpene synthase family. Monomer. Requires Mg(2+) as cofactor.

Its subcellular location is the plastid. The protein localises to the chloroplast. The catalysed reaction is (2E)-geranyl diphosphate = (1R,5R)-sabinene + diphosphate. The protein operates within terpene metabolism; sabinene hydrate biosynthesis. In terms of biological role, catalyzes the formation of the (-)-3-isothujone precursor sabinene from geranyl diphosphate. The enzyme also produces significant amounts of gamma-terpinene, terpinolene and limonene. This Salvia officinalis (Sage) protein is (+)-sabinene synthase, chloroplastic.